We begin with the raw amino-acid sequence, 258 residues long: Spindlin-3 (258 aa).

The tract at residues 1–23 (MKTPFGKAAAGQRSRTGAGHGSV) is disordered. Tudor-like domain stretches follow at residues 50–99 (VGCR…LELH), 129–178 (VGKA…YQLL), and 210–255 (VGKQ…YDLV). 2 histone H3K4me3 and H3R8me2a binding regions span residues Glu138 and 246 to 248 (DFH).

It belongs to the SPIN/STSY family. In terms of assembly, interacts with C11orf84/SPINDOC.

In terms of biological role, exhibits H3K4me3-binding activity. The sequence is that of Spindlin-3 (SPIN3) from Homo sapiens (Human).